Consider the following 249-residue polypeptide: Tumor necrosis factor ligand superfamily member 12 (249 aa).

Topologically, residues 1 to 21 (MAARRSQRRRGRRGEPGTALL) are cytoplasmic. The helical; Signal-anchor for type II membrane protein transmembrane segment at 22-45 (APLVLSLGLALACLGLLLVVVSLG) threads the bilayer. The Extracellular segment spans residues 46–249 (SWATLSAQEP…LTYFGLFQVH (204 aa)). Residues 52-78 (AQEPSQEELTAEDRREPPELNPQTEES) are disordered. Residues 107–248 (IAAHYEVHPR…FLTYFGLFQV (142 aa)) form the THD domain. An N-linked (GlcNAc...) asparagine glycan is attached at Asn-139. A disulfide bond links Cys-191 and Cys-210.

The protein belongs to the tumor necrosis factor family. In terms of assembly, homotrimer. Interacts with the angiogenic factor AGGF1/VG5Q. Post-translationally, the soluble form is produced from the membrane form by proteolytic processing. In terms of tissue distribution, widely expressed.

The protein localises to the cell membrane. The protein resides in the secreted. Its function is as follows. Binds to FN14 and possibly also to TNRFSF12/APO3. Weak inducer of apoptosis in some cell types. Mediates NF-kappa-B activation. Promotes angiogenesis and the proliferation of endothelial cells. Also involved in induction of inflammatory cytokines. Promotes IL8 secretion. This chain is Tumor necrosis factor ligand superfamily member 12 (Tnfsf12), found in Mus musculus (Mouse).